Consider the following 130-residue polypeptide: Small ribosomal subunit protein uS8 (130 aa).

This sequence belongs to the universal ribosomal protein uS8 family. In terms of assembly, part of the 30S ribosomal subunit. Contacts proteins S5 and S12.

Its function is as follows. One of the primary rRNA binding proteins, it binds directly to 16S rRNA central domain where it helps coordinate assembly of the platform of the 30S subunit. In Shewanella piezotolerans (strain WP3 / JCM 13877), this protein is Small ribosomal subunit protein uS8.